A 422-amino-acid polypeptide reads, in one-letter code: SPbeta prophage-derived glycosyltransferase SunS (422 aa).

The protein belongs to the glycosyltransferase 2 family.

Functionally, transfers a hexose moiety onto 'Cys-41' of bacteriocin sublancin-168 (SunA). Accepts UDP-glucose (UDP-Glc), UDP-N-acetylglucosamine (UDP-GlcNAc), UDP-galactose (UDP-Gal), UDP-xylose (UDP-Xyl) and GDP-mannose as substrate. This Bacillus subtilis (strain 168) protein is SPbeta prophage-derived glycosyltransferase SunS (sunS).